The following is a 150-amino-acid chain: Large ribosomal subunit protein bL9 (150 aa).

It belongs to the bacterial ribosomal protein bL9 family.

Its function is as follows. Binds to the 23S rRNA. The sequence is that of Large ribosomal subunit protein bL9 from Hydrogenovibrio crunogenus (strain DSM 25203 / XCL-2) (Thiomicrospira crunogena).